Consider the following 366-residue polypeptide: Aminomethyltransferase (366 aa).

It belongs to the GcvT family. As to quaternary structure, the glycine cleavage system is composed of four proteins: P, T, L and H.

It carries out the reaction N(6)-[(R)-S(8)-aminomethyldihydrolipoyl]-L-lysyl-[protein] + (6S)-5,6,7,8-tetrahydrofolate = N(6)-[(R)-dihydrolipoyl]-L-lysyl-[protein] + (6R)-5,10-methylene-5,6,7,8-tetrahydrofolate + NH4(+). In terms of biological role, the glycine cleavage system catalyzes the degradation of glycine. The chain is Aminomethyltransferase from Bacillus mycoides (strain KBAB4) (Bacillus weihenstephanensis).